We begin with the raw amino-acid sequence, 319 residues long: ADP-L-glycero-D-manno-heptose-6-epimerase (319 aa).

Residues 10–11 (FI), 31–32 (DD), lysine 38, lysine 53, and 79–83 (EGACS) contribute to the NADP(+) site. Residue tyrosine 144 is the Proton acceptor of the active site. Residue lysine 148 participates in NADP(+) binding. Position 173 (asparagine 173) interacts with substrate. NADP(+) is bound by residues valine 174 and lysine 182. The active-site Proton acceptor is the lysine 182. Substrate contacts are provided by residues serine 184, histidine 191, 205 to 208 (FEGC), arginine 218, and tyrosine 282.

This sequence belongs to the NAD(P)-dependent epimerase/dehydratase family. HldD subfamily. As to quaternary structure, homopentamer. The cofactor is NADP(+).

The catalysed reaction is ADP-D-glycero-beta-D-manno-heptose = ADP-L-glycero-beta-D-manno-heptose. It participates in nucleotide-sugar biosynthesis; ADP-L-glycero-beta-D-manno-heptose biosynthesis; ADP-L-glycero-beta-D-manno-heptose from D-glycero-beta-D-manno-heptose 7-phosphate: step 4/4. Catalyzes the interconversion between ADP-D-glycero-beta-D-manno-heptose and ADP-L-glycero-beta-D-manno-heptose via an epimerization at carbon 6 of the heptose. This Aeromonas salmonicida (strain A449) protein is ADP-L-glycero-D-manno-heptose-6-epimerase.